The primary structure comprises 338 residues: Eukaryotic translation initiation factor 3 subunit H (338 aa).

The MPN domain maps to 22–154; sequence VQCDGLAVMK…LKAYRLTPQA (133 aa).

This sequence belongs to the eIF-3 subunit H family. In terms of assembly, component of the eukaryotic translation initiation factor 3 (eIF-3) complex. The eIF-3 complex interacts with pix. Interacts with mxt.

It is found in the cytoplasm. Functionally, component of the eukaryotic translation initiation factor 3 (eIF-3) complex, which is involved in protein synthesis of a specialized repertoire of mRNAs and, together with other initiation factors, stimulates binding of mRNA and methionyl-tRNAi to the 40S ribosome. The eIF-3 complex specifically targets and initiates translation of a subset of mRNAs involved in cell proliferation. The sequence is that of Eukaryotic translation initiation factor 3 subunit H from Drosophila yakuba (Fruit fly).